Reading from the N-terminus, the 1279-residue chain is ATP-dependent helicase/nuclease subunit A (1279 aa).

Residues 4–499 enclose the UvrD-like helicase ATP-binding domain; that stretch reads TKWTDEQRQA…VKLFKNFRSR (496 aa). An ATP-binding site is contributed by 25–32; it reads AGAGAGKT. A UvrD-like helicase C-terminal domain is found at 526-853; the sequence is EEALKVGASY…RIMSIHKSKG (328 aa).

Belongs to the helicase family. AddA subfamily. As to quaternary structure, heterodimer of AddA and AddB/RexB. Mg(2+) is required as a cofactor.

The enzyme catalyses Couples ATP hydrolysis with the unwinding of duplex DNA by translocating in the 3'-5' direction.. The catalysed reaction is ATP + H2O = ADP + phosphate + H(+). Its function is as follows. The heterodimer acts as both an ATP-dependent DNA helicase and an ATP-dependent, dual-direction single-stranded exonuclease. Recognizes the chi site generating a DNA molecule suitable for the initiation of homologous recombination. The AddA nuclease domain is required for chi fragment generation; this subunit has the helicase and 3' -&gt; 5' nuclease activities. The sequence is that of ATP-dependent helicase/nuclease subunit A from Clostridium botulinum (strain Langeland / NCTC 10281 / Type F).